We begin with the raw amino-acid sequence, 87 residues long: Small ribosomal subunit protein uS12m (87 aa).

This sequence belongs to the universal ribosomal protein uS12 family.

The protein localises to the mitochondrion matrix. Its subcellular location is the kinetoplast. Its function is as follows. Protein S12 is involved in the translation initiation step. The protein is Small ribosomal subunit protein uS12m (RPS12) of Trypanoplasma borreli.